A 221-amino-acid chain; its full sequence is UPF0502 protein VSAL_II0605 (221 aa).

This sequence belongs to the UPF0502 family.

The chain is UPF0502 protein VSAL_II0605 from Aliivibrio salmonicida (strain LFI1238) (Vibrio salmonicida (strain LFI1238)).